The following is a 165-amino-acid chain: Chorismate pyruvate-lyase (165 aa).

Residues methionine 35, arginine 77, leucine 115, and glutamate 156 each coordinate substrate.

The protein belongs to the UbiC family. Monomer.

It localises to the cytoplasm. It catalyses the reaction chorismate = 4-hydroxybenzoate + pyruvate. It functions in the pathway cofactor biosynthesis; ubiquinone biosynthesis. Removes the pyruvyl group from chorismate, with concomitant aromatization of the ring, to provide 4-hydroxybenzoate (4HB) for the ubiquinone pathway. The protein is Chorismate pyruvate-lyase of Escherichia coli O127:H6 (strain E2348/69 / EPEC).